Here is a 272-residue protein sequence, read N- to C-terminus: Phosphonates import ATP-binding protein PhnC 1 (272 aa).

In terms of domain architecture, ABC transporter spans 2 to 246 (LRIQALTKTY…VLTSIYGEED (245 aa)). 35–42 (GPSGAGKS) contributes to the ATP binding site.

This sequence belongs to the ABC transporter superfamily. Phosphonates importer (TC 3.A.1.9.1) family. As to quaternary structure, the complex is composed of two ATP-binding proteins (PhnC), two transmembrane proteins (PhnE) and a solute-binding protein (PhnD).

The protein localises to the cell inner membrane. The enzyme catalyses phosphonate(out) + ATP + H2O = phosphonate(in) + ADP + phosphate + H(+). In terms of biological role, part of the ABC transporter complex PhnCDE involved in phosphonates import. Responsible for energy coupling to the transport system. This is Phosphonates import ATP-binding protein PhnC 1 from Rhodopseudomonas palustris (strain BisB18).